Reading from the N-terminus, the 585-residue chain is Cytoplasmic polyadenylation element-binding protein 1 (585 aa).

The segment at 1-32 (MQHQLKACGDVKTSSRAQQNHRRSTAASAKRS) is disordered. 2 RRM domains span residues 251–356 (RKVF…PWRL) and 373–444 (RTVF…HAET). The disordered stretch occupies residues 513–533 (DQTRILPRPPHHPAAHHSHQR). The span at 521–532 (PPHHPAAHHSHQ) shows a compositional bias: basic residues.

Interacts with fbf-1.

Functionally, cytoplasmic polyadenylation element binding protein that binds to and regulates the translation of specific mRNAs. Essential for progression through meiosis. Involved in spermatogenesis. The polypeptide is Cytoplasmic polyadenylation element-binding protein 1 (cpb-1) (Caenorhabditis briggsae).